Consider the following 101-residue polypeptide: Alkene monooxygenase system, effector subunit (101 aa).

The protein belongs to the TmoD/XamoD family. Monomer. The alkene monooxygenase multicomponent enzyme system is composed of an electron transfer component and a monooxygenase component interacting with the effector protein XamoD. The electron transfer component is composed of a ferredoxin reductase (XamoF) and a ferredoxin (XamoC), and the monooxygenase component is formed by a heterohexamer (dimer of heterotrimers) of two alpha subunits (XamoA), two beta subunits (XamoE) and two gamma subunits (XamoB).

It is found in the cytoplasm. Effector component of the alkene monooxygenase multicomponent enzyme system which catalyzes the O2- and NADH-dependent epoxidation of short chain (C2 to C6) alkenes to their corresponding epoxides. One possible role of this small protein might be to facilitate electron transfer between the reductase and ferredoxin components. The sequence is that of Alkene monooxygenase system, effector subunit from Xanthobacter autotrophicus (strain ATCC BAA-1158 / Py2).